A 348-amino-acid polypeptide reads, in one-letter code: UDP-glucose 4-epimerase (348 aa).

Residue Thr-125 participates in substrate binding. The active-site Proton acceptor is the Tyr-149.

This sequence belongs to the NAD(P)-dependent epimerase/dehydratase family. Requires NAD(+) as cofactor.

It catalyses the reaction UDP-alpha-D-glucose = UDP-alpha-D-galactose. It participates in carbohydrate metabolism; galactose metabolism. It functions in the pathway glycan metabolism; exopolysaccharide biosynthesis. This is UDP-glucose 4-epimerase (exoB) from Azospirillum brasilense.